The primary structure comprises 584 residues: A-type ATP synthase subunit A (584 aa).

Residue 233-240 (GPFGSGKT) coordinates ATP.

The protein belongs to the ATPase alpha/beta chains family. Has multiple subunits with at least A(3), B(3), C, D, E, F, H, I and proteolipid K(x).

Its subcellular location is the cell membrane. It carries out the reaction ATP + H2O + 4 H(+)(in) = ADP + phosphate + 5 H(+)(out). In terms of biological role, component of the A-type ATP synthase that produces ATP from ADP in the presence of a proton gradient across the membrane. The A chain is the catalytic subunit. The protein is A-type ATP synthase subunit A of Methanobrevibacter smithii (strain ATCC 35061 / DSM 861 / OCM 144 / PS).